Reading from the N-terminus, the 438-residue chain is DNA primase DnaG (438 aa).

Positions 171–245 (DAILVVEGRA…DIDYVARAPE (75 aa)) constitute a Toprim domain. Residues Glu177, Asp219, and Asp221 each contribute to the Mg(2+) site.

This sequence belongs to the archaeal DnaG primase family. In terms of assembly, forms a ternary complex with MCM helicase and DNA. Component of the archaeal exosome complex. Requires Mg(2+) as cofactor.

It carries out the reaction ssDNA + n NTP = ssDNA/pppN(pN)n-1 hybrid + (n-1) diphosphate.. In terms of biological role, RNA polymerase that catalyzes the synthesis of short RNA molecules used as primers for DNA polymerase during DNA replication. Also part of the exosome, which is a complex involved in RNA degradation. Acts as a poly(A)-binding protein that enhances the interaction between heteromeric, adenine-rich transcripts and the exosome. This chain is DNA primase DnaG, found in Methanothrix thermoacetophila (strain DSM 6194 / JCM 14653 / NBRC 101360 / PT) (Methanosaeta thermophila).